The primary structure comprises 505 residues: Kinesin light chain 3 (505 aa).

The segment at 1 to 20 is disordered; it reads MSVQVAAPGSTGLGPERLNP. Residues 90-150 are a coiled coil; it reads ALSAHVGVLE…EEEKSHLQFL (61 aa). Residues 154–197 form a disordered region; that stretch reads RQYDPPEESQRPDSPPRRDSLASLFPSEEEEKKGPEAAGAAAAQ. Positions 161 to 173 are enriched in basic and acidic residues; that stretch reads ESQRPDSPPRRDS. Residue S173 is modified to Phosphoserine. TPR repeat units lie at residues 207–240, 249–282, 291–324, 333–366, and 375–408; these read LRTL…LERS, ATML…REQT, AATL…REKV, AKQL…YEAL, and AKTK…EALP. The segment at 409-439 is disordered; that stretch reads APLGAPQGGTAGEAQQQVLRRSSSFSKLRES. Polar residues predominate over residues 421–434; that stretch reads EAQQQVLRRSSSFS. The residue at position 467 (S467) is a Phosphoserine. The interval 486–505 is disordered; it reads QHLNEASRTLSASTQDLSPR. T499 is modified (phosphothreonine). S503 carries the post-translational modification Phosphoserine.

It belongs to the kinesin light chain family. As to quaternary structure, oligomer composed of two heavy chains and two light chains. Associates with microtubulin in an ATP-dependent manner. Interacts with KIF5C. Interacts with ODF1. Interacts with LRGUK. Interacts with VDAC2. In terms of tissue distribution, expressed in postmeiotic male germ cells (at protein level).

The protein localises to the cytoplasm. It is found in the cytoskeleton. It localises to the mitochondrion. Its function is as follows. Kinesin is a microtubule-associated force-producing protein that may play a role in organelle transport. Plays a role during spermiogenesis in the development of the sperm tail midpiece and in the normal function of spermatozoa. May play a role in the formation of the mitochondrial sheath formation in the developing spermatid midpiece. The protein is Kinesin light chain 3 (Klc3) of Rattus norvegicus (Rat).